The sequence spans 456 residues: Glutamyl-tRNA(Gln) amidotransferase subunit A (456 aa).

Catalysis depends on charge relay system residues Lys-74 and Ser-149. Residue Ser-173 is the Acyl-ester intermediate of the active site.

The protein belongs to the amidase family. GatA subfamily. As to quaternary structure, heterotrimer of A, B and C subunits.

The catalysed reaction is L-glutamyl-tRNA(Gln) + L-glutamine + ATP + H2O = L-glutaminyl-tRNA(Gln) + L-glutamate + ADP + phosphate + H(+). In terms of biological role, allows the formation of correctly charged Gln-tRNA(Gln) through the transamidation of misacylated Glu-tRNA(Gln) in organisms which lack glutaminyl-tRNA synthetase. The reaction takes place in the presence of glutamine and ATP through an activated gamma-phospho-Glu-tRNA(Gln). The sequence is that of Glutamyl-tRNA(Gln) amidotransferase subunit A from Methanobrevibacter smithii (strain ATCC 35061 / DSM 861 / OCM 144 / PS).